A 148-amino-acid polypeptide reads, in one-letter code: UPF0756 membrane protein YeaL (148 aa).

Transmembrane regions (helical) follow at residues 14–34 (ALGFISHNTTVAVSILVLIIV), 51–71 (LTVGIIILTIGVMAPIASGTL), 86–106 (LVAIAVGVFVSWLGGRGITLM), and 121–141 (VLGVALFRGVPVGPLIAAGLV).

The protein belongs to the UPF0756 family.

It is found in the cell membrane. The protein is UPF0756 membrane protein YeaL of Salmonella choleraesuis (strain SC-B67).